A 132-amino-acid chain; its full sequence is MANQHANHSINDFKQFVKKHPKLIKEVRKEQRSWQDVYENWVLFGESDPIWDPYREPEEASEAVPETPQKNDFVSKMVTAVKKMDVNQMNEQINKMSQSISSLQSLLNTFSGSGQKHSQPGSGQHPFSFRKD.

The segment at 107–132 (LNTFSGSGQKHSQPGSGQHPFSFRKD) is disordered. Positions 108–122 (NTFSGSGQKHSQPGS) are enriched in polar residues.

This is an uncharacterized protein from Bacillus subtilis (strain 168).